A 157-amino-acid polypeptide reads, in one-letter code: UPF0178 protein BH1374 (157 aa).

Belongs to the UPF0178 family.

This is UPF0178 protein BH1374 from Halalkalibacterium halodurans (strain ATCC BAA-125 / DSM 18197 / FERM 7344 / JCM 9153 / C-125) (Bacillus halodurans).